Consider the following 479-residue polypeptide: 5-hydroxytryptamine receptor 2B (479 aa).

The Extracellular portion of the chain corresponds to 1 to 55 (MASSYKMSEQSTISEHILQKTCDHLILTDRSGLKAESAAEEMKQTAENQGNTVHW). The helical transmembrane segment at 56-78 (AALLIFAVIIPTIGGNILVILAV) threads the bilayer. Residues 79-89 (SLEKRLQYATN) are Cytoplasmic-facing. Residues 90–112 (YFLMSLAVADLLVGLFVMPIALL) form a helical membrane-spanning segment. Residues 113–128 (TIMFEATWPLPLALCP) are Extracellular-facing. A disulfide bond links Cys-127 and Cys-206. The chain crosses the membrane as a helical span at residues 129-150 (AWLFLDVLFSTASIMHLCAISL). Residues Asp-134 and Thr-139 each contribute to the ergotamine site. A DRY motif; important for ligand-induced conformation changes motif is present at residues 151–153 (DRY). The Cytoplasmic segment spans residues 151–170 (DRYIAIKKPIQANQCNSRTT). A helical transmembrane segment spans residues 171 to 191 (AFVKITVVWLISIGIAIPVPI). The Extracellular segment spans residues 192–215 (KGIEADVVNAHNITCELTKDRFGS). N-linked (GlcNAc...) asparagine glycosylation occurs at Asn-203. An ergotamine-binding site is contributed by Leu-208. A [DE]RFG motif; may stabilize a conformation that preferentially activates signaling via beta-arrestin family members motif is present at residues 211 to 214 (DRFG). Residues 216 to 238 (FMLFGSLAAFFAPLTIMIVTYFL) traverse the membrane as a helical segment. The Cytoplasmic segment spans residues 239–323 (TIHALRKKAY…TISNEQRASK (85 aa)). Residues 324–344 (VLGIVFLFFLLMWCPFFITNV) traverse the membrane as a helical segment. The Extracellular segment spans residues 345-359 (TLALCDSCNQTTLKT). Cys-349 and Cys-352 are oxidised to a cystine. Residue Asn-353 is glycosylated (N-linked (GlcNAc...) asparagine). A helical membrane pass occupies residues 360 to 381 (LLQIFVWVGYVSSGVNPLIYTL). The NPxxY motif; important for ligand-induced conformation changes and signaling signature appears at 375–379 (NPLIY). Over 382-479 (FNKTFREAFG…DKVEDQVSYI (98 aa)) the chain is Cytoplasmic. Residue Cys-396 is the site of S-palmitoyl cysteine attachment. The short motif at 477-479 (SYI) is the PDZ-binding element.

It belongs to the G-protein coupled receptor 1 family. In terms of assembly, interacts (via C-terminus) with MPDZ. Stomach fundus.

The protein localises to the cell membrane. The protein resides in the synapse. It is found in the synaptosome. G-protein coupled receptor for 5-hydroxytryptamine (serotonin). Also functions as a receptor for various ergot alkaloid derivatives and psychoactive substances. Ligand binding causes a conformation change that triggers signaling via guanine nucleotide-binding proteins (G proteins) and modulates the activity of downstream effectors. HTR2B is coupled to G(q)/G(11) G alpha proteins and activates phospholipase C-beta, releasing diacylglycerol (DAG) and inositol 1,4,5-trisphosphate (IP3) second messengers that modulate the activity of phosphatidylinositol 3-kinase and promote the release of Ca(2+) ions from intracellular stores, respectively. Beta-arrestin family members inhibit signaling via G proteins and mediate activation of alternative signaling pathways. Plays a role in the regulation of dopamine and 5-hydroxytryptamine release, 5-hydroxytryptamine uptake and in the regulation of extracellular dopamine and 5-hydroxytryptamine levels, and thereby affects neural activity. May play a role in the perception of pain. Plays a role in the regulation of behavior, including impulsive behavior. Required for normal proliferation of embryonic cardiac myocytes and normal heart development. Protects cardiomyocytes against apoptosis. Plays a role in the adaptation of pulmonary arteries to chronic hypoxia. Plays a role in vasoconstriction. Required for normal osteoblast function and proliferation, and for maintaining normal bone density. Required for normal proliferation of the interstitial cells of Cajal in the intestine. This Rattus norvegicus (Rat) protein is 5-hydroxytryptamine receptor 2B (Htr2b).